Reading from the N-terminus, the 624-residue chain is 1-deoxy-D-xylulose-5-phosphate synthase (624 aa).

Residues H80 and 121-123 (GHS) each bind thiamine diphosphate. D152 contributes to the Mg(2+) binding site. Residues 153 to 154 (GA), N181, Y288, and E370 contribute to the thiamine diphosphate site. N181 contributes to the Mg(2+) binding site.

It belongs to the transketolase family. DXPS subfamily. Homodimer. It depends on Mg(2+) as a cofactor. Thiamine diphosphate is required as a cofactor.

It catalyses the reaction D-glyceraldehyde 3-phosphate + pyruvate + H(+) = 1-deoxy-D-xylulose 5-phosphate + CO2. It functions in the pathway metabolic intermediate biosynthesis; 1-deoxy-D-xylulose 5-phosphate biosynthesis; 1-deoxy-D-xylulose 5-phosphate from D-glyceraldehyde 3-phosphate and pyruvate: step 1/1. Catalyzes the acyloin condensation reaction between C atoms 2 and 3 of pyruvate and glyceraldehyde 3-phosphate to yield 1-deoxy-D-xylulose-5-phosphate (DXP). The chain is 1-deoxy-D-xylulose-5-phosphate synthase from Proteus mirabilis (strain HI4320).